The following is a 739-amino-acid chain: Lysyl oxidase homolog 3A (739 aa).

Residues 1 to 25 (MLRSELRDMVVAMVLWGILLPFCLS) form the signal peptide. 4 consecutive SRCR domains span residues 38-139 (FRLA…VICK), 166-272 (LRPL…VSCV), 293-393 (MRLK…VICN), and 403-511 (MRLT…VICS). Intrachain disulfides connect cysteine 64-cysteine 128, cysteine 77-cysteine 138, cysteine 108-cysteine 118, cysteine 196-cysteine 261, cysteine 209-cysteine 271, cysteine 238-cysteine 248, cysteine 318-cysteine 382, cysteine 331-cysteine 392, cysteine 362-cysteine 372, cysteine 433-cysteine 497, cysteine 446-cysteine 510, and cysteine 479-cysteine 489. N-linked (GlcNAc...) asparagine glycosylation occurs at asparagine 256. Asparagine 468 carries an N-linked (GlcNAc...) asparagine glycan. Asparagine 611 carries N-linked (GlcNAc...) asparagine glycosylation. The lysine tyrosylquinone (Lys-Tyr) cross-link spans 620 to 656 (KASFCLEDTECHEGVSKRYECANFGEQGITVGCWDLY). At tyrosine 656 the chain carries 2',4',5'-topaquinone.

It belongs to the lysyl oxidase family. Cu cation serves as cofactor. Requires lysine tyrosylquinone residue as cofactor. In terms of processing, the lysine tyrosylquinone cross-link (LTQ) is generated by condensation of the epsilon-amino group of a lysine with a topaquinone produced by oxidation of tyrosine.

The protein resides in the secreted. The protein localises to the extracellular space. Its subcellular location is the cytoplasm. It localises to the nucleus. The catalysed reaction is L-lysyl-[protein] + O2 + H2O = (S)-2-amino-6-oxohexanoyl-[protein] + H2O2 + NH4(+). The enzyme catalyses N(6)-acetyl-L-lysyl-[protein] + O2 + H2O = acetamide + (S)-2-amino-6-oxohexanoyl-[protein] + H2O2. In terms of biological role, protein-lysine 6-oxidase that mediates the oxidation of peptidyl lysine residues to allysine in target proteins. Catalyzes the post-translational oxidative deamination of peptidyl lysine residues in precursors of elastin and different types of collagens, a prerequisite in the formation of cross-links between collagens and elastin. Can mediate oxidation of lysine residues that are acetylated. Also able to catalyze deacetylation of lysine residues. This is Lysyl oxidase homolog 3A from Danio rerio (Zebrafish).